Consider the following 234-residue polypeptide: Large ribosomal subunit protein uL1 (234 aa).

Belongs to the universal ribosomal protein uL1 family. As to quaternary structure, part of the 50S ribosomal subunit.

In terms of biological role, binds directly to 23S rRNA. The L1 stalk is quite mobile in the ribosome, and is involved in E site tRNA release. Its function is as follows. Protein L1 is also a translational repressor protein, it controls the translation of the L11 operon by binding to its mRNA. The chain is Large ribosomal subunit protein uL1 from Corynebacterium aurimucosum (strain ATCC 700975 / DSM 44827 / CIP 107346 / CN-1) (Corynebacterium nigricans).